We begin with the raw amino-acid sequence, 119 residues long: MPDYSYRPTIGPTYVYHNKYYKNLGSVIKKPKRKKHLVEHEEEEKDPLDNYMVAEDPFLGPGKNQKLTLFKEIRNVKPDTMKLIVNWSGKEFLRETWTRFVEDSFPIVNDQEVMDVFLV.

It belongs to the polyhedrin family.

Major component of the virus occlusion bodies, which are large proteinaceous structures (polyhedra), that protect the virus from the outside environment for extended periods until they are ingested by insect larvae. In Antheraea pernyi nuclear polyhedrosis virus (ApNPV), this protein is Polyhedrin (PH).